The chain runs to 693 residues: Glycine--tRNA ligase beta subunit (693 aa).

The protein belongs to the class-II aminoacyl-tRNA synthetase family. Tetramer of two alpha and two beta subunits.

The protein resides in the cytoplasm. It carries out the reaction tRNA(Gly) + glycine + ATP = glycyl-tRNA(Gly) + AMP + diphosphate. The chain is Glycine--tRNA ligase beta subunit from Vibrio campbellii (strain ATCC BAA-1116).